The primary structure comprises 119 residues: UPF0102 protein Nther_1376 (119 aa).

The protein belongs to the UPF0102 family.

This Natranaerobius thermophilus (strain ATCC BAA-1301 / DSM 18059 / JW/NM-WN-LF) protein is UPF0102 protein Nther_1376.